A 159-amino-acid chain; its full sequence is Ribosome maturation factor RimP (159 aa).

The protein belongs to the RimP family.

The protein resides in the cytoplasm. Functionally, required for maturation of 30S ribosomal subunits. The chain is Ribosome maturation factor RimP from Geotalea uraniireducens (strain Rf4) (Geobacter uraniireducens).